The primary structure comprises 198 residues: Recombination protein RecR (198 aa).

A C4-type zinc finger spans residues 57 to 72 (CEKCNTFTEAQICEVC). In terms of domain architecture, Toprim spans 80–175 (TLLCVVETPA…AVTRLARGVP (96 aa)).

The protein belongs to the RecR family.

In terms of biological role, may play a role in DNA repair. It seems to be involved in an RecBC-independent recombinational process of DNA repair. It may act with RecF and RecO. The sequence is that of Recombination protein RecR from Burkholderia cenocepacia (strain HI2424).